Consider the following 92-residue polypeptide: Small ribosomal subunit protein uS19c (92 aa).

It belongs to the universal ribosomal protein uS19 family.

The protein localises to the plastid. Its subcellular location is the chloroplast. In terms of biological role, protein S19 forms a complex with S13 that binds strongly to the 16S ribosomal RNA. This Pyropia yezoensis (Susabi-nori) protein is Small ribosomal subunit protein uS19c.